The chain runs to 48 residues: Sperm protamine P1 (48 aa).

The protein belongs to the protamine P1 family. Cross-linked by interchain disulfide bonds around the DNA-helix. In terms of tissue distribution, testis.

The protein localises to the nucleus. It localises to the chromosome. In terms of biological role, protamines substitute for histones in the chromatin of sperm during the haploid phase of spermatogenesis. They compact sperm DNA into a highly condensed, stable and inactive complex. The chain is Sperm protamine P1 (PRM1) from Cavia porcellus (Guinea pig).